An 862-amino-acid chain; its full sequence is DNA mismatch repair protein MutS (862 aa).

ATP is bound at residue 613–620 (GPNMAGKS).

This sequence belongs to the DNA mismatch repair MutS family.

This protein is involved in the repair of mismatches in DNA. It is possible that it carries out the mismatch recognition step. This protein has a weak ATPase activity. The polypeptide is DNA mismatch repair protein MutS (Desulfitobacterium hafniense (strain Y51)).